Reading from the N-terminus, the 696-residue chain is MMHIQTLRKITILDVQDKQRCLSTNQNVPDNVFQLIACWCYFPPFLSIAKIKPLIALKAGISENPVLIGCRRIKMAHCPYSEAMTRTTSVEDVKFEIPAWDNSNVDVADGSGRPESSTSGDTIRPKGRIRRSMTACNTCRKLKTRCDLDPRGHACRRCLSLRIECKLPETAERFQDNASMWSDATAAIPSIEERLISLERSMTEMTSMMRRMMDRSPSISGSSVSMLTRSGITDETASIEGSQSSSFAPRPIRLFQDLQSDFTGEANVLPADSRSLGDLFTKGIIDPKLSQKLIQLFVDHFGIWISVDNPSDIHNELRATDPLLYSTACLLASRYVPGIPLSVIHAMYLQIRHATVNVLWNKTPLKHETLQALALLALWPTAVQKETPMDSWLLSGISINHAIISFDFLNHAPSDLIVDNDMVAKLRVWNALCLTQLQSAIGNARPFHIQQRYLEHCPRLLEHPAATFEDGKIVAEIQLYLIALKLQNFSHRMRLGDFEYEEIERWKMEWAHLLKLSLWYCQLLLYRTAMRFHWESEHLISEILRNSRLILSKFLLVRFPNALAFPDQIYYIVGYAALNLCDFSPMDPLIDQVQTFLLHLSPNEDHIAYRFSYTITELKRRCATGPNPHNVVKGAFGDTRKLSMGQQIPFMNPLMDTMMGEYGGLEHLIPEVPPNSLPDMLTSVAGELQAFRTAIL.

The interval 106–126 is disordered; sequence DVADGSGRPESSTSGDTIRPK. Residues 136 to 165 constitute a DNA-binding region (zn(2)-C6 fungal-type); it reads CNTCRKLKTRCDLDPRGHACRRCLSLRIEC.

This sequence belongs to the prtT family.

It localises to the nucleus. In terms of biological role, transcription factor required for protein utilization and degradation. Regulates transcription of major secreted proteases including a serine alkaline protease (alk1), a metalloprotease (mep), an aspergillopepsin (pep1), a sedolisin (sed2) and two dipeptidyl-peptidases (dppIV and dppV). However, it is not a virulence determinant in leukopenic mice. This Aspergillus fumigatus (strain ATCC MYA-4609 / CBS 101355 / FGSC A1100 / Af293) (Neosartorya fumigata) protein is Transcriptional activator of proteases prtT (prtT).